Consider the following 438-residue polypeptide: Elongation factor 1-alpha (438 aa).

Positions 5–228 constitute a tr-type G domain; the sequence is KPHLNLVVIG…ALDSLEPPPK (224 aa). Residues 14 to 21 form a G1 region; that stretch reads GHVDHGKS. 14–21 is a GTP binding site; the sequence is GHVDHGKS. Residue S21 coordinates Mg(2+). The interval 70-74 is G2; it reads GVTIA. The G3 stretch occupies residues 91–94; that stretch reads DAPG. Residues 91–95 and 153–156 contribute to the GTP site; these read DAPGH and NKMD. The tract at residues 153-156 is G4; it reads NKMD. The tract at residues 194–196 is G5; the sequence is SAW.

It belongs to the TRAFAC class translation factor GTPase superfamily. Classic translation factor GTPase family. EF-Tu/EF-1A subfamily.

The protein localises to the cytoplasm. It carries out the reaction GTP + H2O = GDP + phosphate + H(+). Functionally, GTP hydrolase that promotes the GTP-dependent binding of aminoacyl-tRNA to the A-site of ribosomes during protein biosynthesis. In Staphylothermus marinus (strain ATCC 43588 / DSM 3639 / JCM 9404 / F1), this protein is Elongation factor 1-alpha.